The sequence spans 1249 residues: MAGE-like protein 2 (1249 aa).

Polar residues predominate over residues Met1–Asp10. Disordered stretches follow at residues Met1–Asp50, Ala134–Pro233, Gln300–Ala327, Pro349–Thr378, Arg410–Ala433, Gln515–Pro569, Gln647–Thr679, Leu714–Ser746, Pro862–Gly910, and Val930–Gly957. Pro residues-rich tracts occupy residues Pro40–Ile49 and Ala140–Pro233. The segment covering Pro301 to Pro311 has biased composition (low complexity). Pro residues-rich tracts occupy residues Ala312 to Gln324 and Pro349 to Pro358. Positions Gln369–Thr378 are enriched in polar residues. The segment covering Arg410–Gln432 has biased composition (pro residues). Low complexity predominate over residues Gln525 to Pro552. A compositionally biased stretch (pro residues) spans Ala553 to Pro567. Over residues Gln662–Ala675 the composition is skewed to low complexity. The segment covering Ser725–Ser746 has biased composition (basic and acidic residues). Residues Pro862–Ala871 are compositionally biased toward low complexity. The span at Arg881–His891 shows a compositional bias: basic residues. In terms of domain architecture, MAGE spans Leu1020 to Ala1219. The segment covering Glu1226 to Thr1235 has biased composition (acidic residues). The segment at Glu1226–Arg1249 is disordered.

In terms of assembly, part of a complex consisting of MAGEL2, TRIM27 and USP7; directly interacts with USP7. Interacts with TRIM27. Interacts with VPS35; leading to recruitment at retromer-containing endosomes. Interacts with BMAL1 and PER2. Expressed in placenta, fetal and adult brain. Not detected in heart and small intestine, very low levels in fibroblasts. Not expressed in brain of a Prader-Willi patient.

The protein resides in the early endosome. It localises to the cytoplasm. It is found in the nucleus. Functionally, probably enhances ubiquitin ligase activity of RING-type zinc finger-containing E3 ubiquitin-protein ligases, possibly through recruitment and/or stabilization of the Ubl-conjugating enzyme (E2) at the E3:substrate complex. Acts as a regulator of retrograde transport via its interaction with VPS35. Recruited to retromer-containing endosomes and promotes the formation of 'Lys-63'-linked polyubiquitin chains at 'Lys-220' of WASHC1 together with TRIM27, leading to promote endosomal F-actin assembly. Regulates the circadian clock by repressing the transcriptional activator activity of the CLOCK-BMAL1 heterodimer. Significantly promotes the cytoplasmic accumulation of CLOCK. The sequence is that of MAGE-like protein 2 (MAGEL2) from Homo sapiens (Human).